Reading from the N-terminus, the 998-residue chain is Mis18-binding protein 1 (998 aa).

K7 participates in a covalent cross-link: Glycyl lysine isopeptide (Lys-Gly) (interchain with G-Cter in SUMO2). Residues S9, S109, and S134 each carry the phosphoserine modification. Residues 122-153 (QRDKQEQLTRSSSMLGSPQGEHTKDFPPNTDK) form a disordered region. A compositionally biased stretch (basic and acidic residues) spans 142-153 (EHTKDFPPNTDK). A phosphoserine mark is found at S169 and S258. The region spanning 336 to 422 (VHLQEWMIKV…MFGFPHNWKE (87 aa)) is the SANTA domain. 2 disordered regions span residues 438-460 (KTRQETARVQEKQKSKKKDAEDK) and 476-502 (DNSLERTEVPTDPLNSLEQPTSGKERR). Residues 488–497 (PLNSLEQPTS) show a composition bias toward polar residues. Residues T516 and T578 each carry the phosphothreonine modification. Phosphoserine is present on residues S638 and S639. The disordered stretch occupies residues 638–660 (SSEENEVEIKSRTRARNTKERLN). Over residues 644 to 660 (VEIKSRTRARNTKERLN) the composition is skewed to basic and acidic residues. Position 688 is a phosphothreonine (T688). A Glycyl lysine isopeptide (Lys-Gly) (interchain with G-Cter in SUMO2) cross-link involves residue K707. The residue at position 726 (S726) is a Phosphoserine. An SANT domain is found at 741 to 796 (TDDEEWSEQELQKLHCAFTSLPKHKPGFWSDVAMAVGSRTADECQKKYTEEPQGQG). K765 participates in a covalent cross-link: Glycyl lysine isopeptide (Lys-Gly) (interchain with G-Cter in SUMO2). The interval 784-821 (CQKKYTEEPQGQGSRKHGSKKKQANKVQNGEKDSADAK) is disordered. Positions 797–807 (SRKHGSKKKQA) are enriched in basic residues. Basic and acidic residues predominate over residues 812-821 (NGEKDSADAK). Glycyl lysine isopeptide (Lys-Gly) (interchain with G-Cter in SUMO2) cross-links involve residues K821, K828, and K847. S872 is modified (phosphoserine). A Glycyl lysine isopeptide (Lys-Gly) (interchain with G-Cter in SUMO2) cross-link involves residue K948. 2 positions are modified to phosphoserine: S955 and S985. The disordered stretch occupies residues 976-998 (SKYFIDDTESDEEEKDYYFSNSD). A compositionally biased stretch (acidic residues) spans 981 to 990 (DDTESDEEEK).

In terms of assembly, interacts with SP1. Interacts with MIS18A. Identified in a complex containing MIS18A, OIP5/MIS18B, MIS18BP1, RBBP7 and RBBP4. Interacts with KAT7/HBO1. Interacts (via N-terminus) with FLNA (via N-terminus).

The protein resides in the nucleus. It is found in the chromosome. It localises to the centromere. Its function is as follows. Required for recruitment of CENPA to centromeres and normal chromosome segregation during mitosis. The polypeptide is Mis18-binding protein 1 (Mis18bp1) (Mus musculus (Mouse)).